The primary structure comprises 229 residues: UPF0173 metal-dependent hydrolase Hbut_0886 (229 aa).

The protein belongs to the UPF0173 family.

This is UPF0173 metal-dependent hydrolase Hbut_0886 from Hyperthermus butylicus (strain DSM 5456 / JCM 9403 / PLM1-5).